Consider the following 394-residue polypeptide: 5-azacytidine-induced protein 2 (394 aa).

Residues Met1–Asp197 form a homodimerization region. 2 coiled-coil regions span residues Ala40–Arg76 and Asp102–Thr196. The interaction with TBK1 and IKBKE stretch occupies residues Ser216–Cys257. 2 positions are modified to phosphoserine: Ser318 and Ser355. The tract at residues Ser355–Pro379 is disordered.

As to quaternary structure, homodimer. Interacts with IKBKE, TBK1 and TICAM1. Interacts with TAX1BP1. Interacts with CALCOCO2. Post-translationally, ubiquitinated via 'Lys-48'-linked polyubiquitination by TRIM38, leading to its degradation.

It localises to the cytoplasm. In terms of biological role, adapter protein which binds TBK1 and IKBKE playing a role in antiviral innate immunity. Activates serine/threonine-protein kinase TBK1 and facilitates its oligomerization. Enhances the phosphorylation of NF-kappa-B p65 subunit RELA by TBK1. Promotes TBK1-induced as well as TNF-alpha or PMA-induced activation of NF-kappa-B. Participates in IFNB promoter activation via TICAM1. The sequence is that of 5-azacytidine-induced protein 2 (AZI2) from Macaca fascicularis (Crab-eating macaque).